A 159-amino-acid polypeptide reads, in one-letter code: MDVIEGNTVVSNITKIVVVVARFNKAINNHLLEGTIDTLKRVGQVQDENITIVWVPGAYELPLVSQALSISNKYDAIIVLGTIIRGITEHFEFIYKSCNFGLSNISISNLVPIGLGLLVTNDIGQAVERIGIKGNNKGSEAALAALEMINILKTIKNNN.

Residues F23, 58 to 60 (AYE), and 82 to 84 (TII) contribute to the 5-amino-6-(D-ribitylamino)uracil site. H90 acts as the Proton donor in catalysis. A 5-amino-6-(D-ribitylamino)uracil-binding site is contributed by L115. R129 is a binding site for (2S)-2-hydroxy-3-oxobutyl phosphate.

It belongs to the DMRL synthase family. As to quaternary structure, forms an icosahedral capsid composed of 60 subunits, arranged as a dodecamer of pentamers.

It carries out the reaction (2S)-2-hydroxy-3-oxobutyl phosphate + 5-amino-6-(D-ribitylamino)uracil = 6,7-dimethyl-8-(1-D-ribityl)lumazine + phosphate + 2 H2O + H(+). Its pathway is cofactor biosynthesis; riboflavin biosynthesis; riboflavin from 2-hydroxy-3-oxobutyl phosphate and 5-amino-6-(D-ribitylamino)uracil: step 1/2. Functionally, catalyzes the formation of 6,7-dimethyl-8-ribityllumazine by condensation of 5-amino-6-(D-ribitylamino)uracil with 3,4-dihydroxy-2-butanone 4-phosphate. This is the penultimate step in the biosynthesis of riboflavin. The chain is 6,7-dimethyl-8-ribityllumazine synthase from Blochmanniella floridana.